The chain runs to 482 residues: tRNA sulfurtransferase (482 aa).

Residues 61 to 165 form the THUMP domain; it reads NQVLTAVTHT…NEKLNLVIAR (105 aa). ATP-binding positions include 183-184, Lys265, Gly287, and Gln296; that span reads LI. A disulfide bridge links Cys344 with Cys456. The Rhodanese domain maps to 404-482; the sequence is LGSDVVVLDI…GYKNVKVYRP (79 aa). Cys456 serves as the catalytic Cysteine persulfide intermediate.

This sequence belongs to the ThiI family.

Its subcellular location is the cytoplasm. The catalysed reaction is [ThiI sulfur-carrier protein]-S-sulfanyl-L-cysteine + a uridine in tRNA + 2 reduced [2Fe-2S]-[ferredoxin] + ATP + H(+) = [ThiI sulfur-carrier protein]-L-cysteine + a 4-thiouridine in tRNA + 2 oxidized [2Fe-2S]-[ferredoxin] + AMP + diphosphate. It catalyses the reaction [ThiS sulfur-carrier protein]-C-terminal Gly-Gly-AMP + S-sulfanyl-L-cysteinyl-[cysteine desulfurase] + AH2 = [ThiS sulfur-carrier protein]-C-terminal-Gly-aminoethanethioate + L-cysteinyl-[cysteine desulfurase] + A + AMP + 2 H(+). It participates in cofactor biosynthesis; thiamine diphosphate biosynthesis. Functionally, catalyzes the ATP-dependent transfer of a sulfur to tRNA to produce 4-thiouridine in position 8 of tRNAs, which functions as a near-UV photosensor. Also catalyzes the transfer of sulfur to the sulfur carrier protein ThiS, forming ThiS-thiocarboxylate. This is a step in the synthesis of thiazole, in the thiamine biosynthesis pathway. The sulfur is donated as persulfide by IscS. The polypeptide is tRNA sulfurtransferase (Aliivibrio salmonicida (strain LFI1238) (Vibrio salmonicida (strain LFI1238))).